The primary structure comprises 175 residues: EKC/KEOPS complex subunit TPRKB (175 aa).

This sequence belongs to the CGI121/TPRKB family. In terms of assembly, component of the EKC/KEOPS complex.

Its subcellular location is the cytoplasm. It is found in the cytosol. The protein localises to the nucleus. Functionally, component of the EKC/KEOPS complex that is required for the formation of a threonylcarbamoyl group on adenosine at position 37 (t(6)A37) in tRNAs that read codons beginning with adenine. The complex is probably involved in the transfer of the threonylcarbamoyl moiety of threonylcarbamoyl-AMP (TC-AMP) to the N6 group of A37. Tprkb acts as an allosteric effector that regulates the t(6)A activity of the complex. The sequence is that of EKC/KEOPS complex subunit TPRKB from Danio rerio (Zebrafish).